Consider the following 641-residue polypeptide: SUMO-activating enzyme subunit 2 (641 aa).

ATP contacts are provided by residues 24-29 (GAGGIG), D48, 56-59 (NLNR), K72, 95-96 (SI), and 117-122 (DNNAAR). 2 residues coordinate Zn(2+): C158 and C161. C173 (glycyl thioester intermediate) is an active-site residue. K190 is covalently cross-linked (Glycyl lysine isopeptide (Lys-Gly) (interchain with G-Cter in SUMO)). A Glycyl lysine isopeptide (Lys-Gly) (interchain with G-Cter in SUMO1) cross-link involves residue K236. Glycyl lysine isopeptide (Lys-Gly) (interchain with G-Cter in SUMO) cross-links involve residues K257 and K275. The Zn(2+) site is built by C439 and C442. The tract at residues 546–641 (GDVPEKGPQK…EEDDDIIALD (96 aa)) is disordered. A compositionally biased stretch (polar residues) spans 556–579 (PSEQSVKNITNGSDDGAQPSTSKA). The segment covering 582–594 (QDDVLIVDSDEES) has biased composition (acidic residues). Glycyl lysine isopeptide (Lys-Gly) (interchain with G-Cter in SUMO) cross-links involve residues K610, K612, and K623. A compositionally biased stretch (acidic residues) spans 630 to 641 (PVEEDDDIIALD).

It belongs to the ubiquitin-activating E1 family. In terms of assembly, heterodimer of sae1 and uba2/sae2. The heterodimer corresponds to the two domains that are encoded on a single polypeptide chain in ubiquitin-activating enzyme E1. Interacts with ube2i. Post-translationally, sumoylated with SUMO1 and SUMO2/3 and by UBC9. Sumoylation at Lys-236 inhibits enzymatic activity. Sumoylation at the C-terminal lysine cluster plays an essential role in nuclear trafficking.

It localises to the cytoplasm. The protein resides in the nucleus. The protein operates within protein modification; protein sumoylation. The heterodimer acts as an E1 ligase for sumo1, sumo2, and sumo3. It mediates ATP-dependent activation of sumo proteins followed by formation of a thioester bond between a sumo protein and a conserved active site cysteine residue on uba2/sae2. The sequence is that of SUMO-activating enzyme subunit 2 (uba2) from Xenopus tropicalis (Western clawed frog).